The chain runs to 399 residues: MLSILSIAALLIATVQAADFSSSCPIDSPISCSSNGDTSNSCCYENPGGIILFTQFWDYNPASGPADSFTIHSIWNDYCSGGYPQFCDTSLEIDSTGSTIESIVVDQFGDQTLYDNMNKYWTDINGNNKKFWAHEFNKHGTCLNTLNPSCYSNYKQNENVYDYYSLVYQLFQKLPTYQWLVSAGIKPSTTATYTLSQIQSALKSKFGAEVYIACDSNNAINEVWYFYNIKGSILQQNYLPIDTVSKTNCPSSGIKFPPKGNSGANTLTTKTTGTTTSGSGSTSVPATSYINLTGKSGCLISNGKYYTSGTCATYHFNAGSSGNTQITSSKGNCGIDSSNQFTCSSSTSATDFQVSGGSIGYNGNFDWCLGAVTGSGSTAQTSVKLSDGSCSSFKLTLSS.

The signal sequence occupies residues 1–17 (MLSILSIAALLIATVQA). 5 cysteine pairs are disulfide-bonded: C24–C43, C32–C79, C42–C150, C87–C142, and C214–C249. Active-site residues include H72, E135, and H139. The disordered stretch occupies residues 259-279 (KGNSGANTLTTKTTGTTTSGS). The segment covering 262 to 279 (SGANTLTTKTTGTTTSGS) has biased composition (low complexity). An N-linked (GlcNAc...) asparagine glycan is attached at N291.

Belongs to the RNase T2 family.

It localises to the vacuole lumen. It is found in the cytoplasm. The catalysed reaction is a ribonucleotidyl-ribonucleotide-RNA + H2O = a 3'-end 3'-phospho-ribonucleotide-RNA + a 5'-end dephospho-ribonucleoside-RNA + H(+). In terms of biological role, rnase which modulates cell survival under stress conditions. Released from the vacuole to the cytoplasm during stress to promote tRNA and rRNA cleavage and to activate separately a downstream pathway that promotes cell death. Involved in cell size, vacuolar morphology and growth at high temperatures and high salt concentration. This chain is Ribonuclease T2-like 1-A (RNY1-A), found in Candida albicans (strain SC5314 / ATCC MYA-2876) (Yeast).